The following is a 488-amino-acid chain: 3-octaprenyl-4-hydroxybenzoate carboxy-lyase (488 aa).

Mn(2+) is bound at residue asparagine 172. Prenylated FMN is bound by residues 175–177 (IYR), 189–191 (RWL), and 194–195 (RG). Glutamate 238 is a binding site for Mn(2+). The Proton donor role is filled by aspartate 287.

The protein belongs to the UbiD family. As to quaternary structure, homohexamer. The cofactor is prenylated FMN. Mn(2+) is required as a cofactor.

The protein localises to the cell membrane. The catalysed reaction is a 4-hydroxy-3-(all-trans-polyprenyl)benzoate + H(+) = a 2-(all-trans-polyprenyl)phenol + CO2. The protein operates within cofactor biosynthesis; ubiquinone biosynthesis. Its function is as follows. Catalyzes the decarboxylation of 3-octaprenyl-4-hydroxy benzoate to 2-octaprenylphenol, an intermediate step in ubiquinone biosynthesis. The protein is 3-octaprenyl-4-hydroxybenzoate carboxy-lyase of Pseudomonas fluorescens (strain SBW25).